We begin with the raw amino-acid sequence, 25 residues long: Chaperone protein DnaK (25 aa).

The protein belongs to the heat shock protein 70 family.

Acts as a chaperone. In Acinetobacter calcoaceticus, this protein is Chaperone protein DnaK (dnaK).